A 322-amino-acid polypeptide reads, in one-letter code: Lipoyl synthase (322 aa).

C69, C74, C80, C95, C99, C102, and S309 together coordinate [4Fe-4S] cluster. The region spanning 81 to 298 (FNHGTATFMI…GVKAKALGFD (218 aa)) is the Radical SAM core domain.

It belongs to the radical SAM superfamily. Lipoyl synthase family. [4Fe-4S] cluster serves as cofactor.

The protein resides in the cytoplasm. It carries out the reaction [[Fe-S] cluster scaffold protein carrying a second [4Fe-4S](2+) cluster] + N(6)-octanoyl-L-lysyl-[protein] + 2 oxidized [2Fe-2S]-[ferredoxin] + 2 S-adenosyl-L-methionine + 4 H(+) = [[Fe-S] cluster scaffold protein] + N(6)-[(R)-dihydrolipoyl]-L-lysyl-[protein] + 4 Fe(3+) + 2 hydrogen sulfide + 2 5'-deoxyadenosine + 2 L-methionine + 2 reduced [2Fe-2S]-[ferredoxin]. The protein operates within protein modification; protein lipoylation via endogenous pathway; protein N(6)-(lipoyl)lysine from octanoyl-[acyl-carrier-protein]: step 2/2. In terms of biological role, catalyzes the radical-mediated insertion of two sulfur atoms into the C-6 and C-8 positions of the octanoyl moiety bound to the lipoyl domains of lipoate-dependent enzymes, thereby converting the octanoylated domains into lipoylated derivatives. This Psychromonas ingrahamii (strain DSM 17664 / CCUG 51855 / 37) protein is Lipoyl synthase.